A 433-amino-acid polypeptide reads, in one-letter code: Glutamate--tRNA ligase 1 (433 aa).

The short motif at 7–17 is the 'HIGH' region element; sequence PSPTGLIHLGN. The 'KMSKS' region signature appears at 230–234; sequence KMSKR. Position 233 (Lys-233) interacts with ATP.

The protein belongs to the class-I aminoacyl-tRNA synthetase family. Glutamate--tRNA ligase type 1 subfamily. As to quaternary structure, monomer.

It localises to the cytoplasm. It catalyses the reaction tRNA(Glu) + L-glutamate + ATP = L-glutamyl-tRNA(Glu) + AMP + diphosphate. In terms of biological role, catalyzes the attachment of glutamate to tRNA(Glu) in a two-step reaction: glutamate is first activated by ATP to form Glu-AMP and then transferred to the acceptor end of tRNA(Glu). The chain is Glutamate--tRNA ligase 1 from Neorickettsia sennetsu (strain ATCC VR-367 / Miyayama) (Ehrlichia sennetsu).